The primary structure comprises 88 residues: UPF0250 protein Sama_2593 (88 aa).

The protein belongs to the UPF0250 family.

The sequence is that of UPF0250 protein Sama_2593 from Shewanella amazonensis (strain ATCC BAA-1098 / SB2B).